A 208-amino-acid chain; its full sequence is ATP-dependent Clp protease proteolytic subunit (208 aa).

The Nucleophile role is filled by serine 106. Residue histidine 131 is part of the active site.

The protein belongs to the peptidase S14 family. Fourteen ClpP subunits assemble into 2 heptameric rings which stack back to back to give a disk-like structure with a central cavity, resembling the structure of eukaryotic proteasomes.

The protein resides in the cytoplasm. It carries out the reaction Hydrolysis of proteins to small peptides in the presence of ATP and magnesium. alpha-casein is the usual test substrate. In the absence of ATP, only oligopeptides shorter than five residues are hydrolyzed (such as succinyl-Leu-Tyr-|-NHMec, and Leu-Tyr-Leu-|-Tyr-Trp, in which cleavage of the -Tyr-|-Leu- and -Tyr-|-Trp bonds also occurs).. Functionally, cleaves peptides in various proteins in a process that requires ATP hydrolysis. Has a chymotrypsin-like activity. Plays a major role in the degradation of misfolded proteins. The polypeptide is ATP-dependent Clp protease proteolytic subunit (Roseobacter denitrificans (strain ATCC 33942 / OCh 114) (Erythrobacter sp. (strain OCh 114))).